The sequence spans 360 residues: Protein-glutamate methylesterase/protein-glutamine glutaminase 3 (360 aa).

The region spanning 14–131 (RVLVIDDSAT…AEGVQAYAEE (118 aa)) is the Response regulatory domain. 4-aspartylphosphate is present on aspartate 65. The region spanning 169 to 360 (AGKDGRVVAV…AGKLMELDGA (192 aa)) is the CheB-type methylesterase domain. Catalysis depends on residues serine 181, histidine 207, and aspartate 303.

Belongs to the CheB family. Post-translationally, phosphorylated by CheA. Phosphorylation of the N-terminal regulatory domain activates the methylesterase activity.

It is found in the cytoplasm. It catalyses the reaction [protein]-L-glutamate 5-O-methyl ester + H2O = L-glutamyl-[protein] + methanol + H(+). The catalysed reaction is L-glutaminyl-[protein] + H2O = L-glutamyl-[protein] + NH4(+). Its function is as follows. Involved in chemotaxis. Part of a chemotaxis signal transduction system that modulates chemotaxis in response to various stimuli. Catalyzes the demethylation of specific methylglutamate residues introduced into the chemoreceptors (methyl-accepting chemotaxis proteins or MCP) by CheR. Also mediates the irreversible deamidation of specific glutamine residues to glutamic acid. The polypeptide is Protein-glutamate methylesterase/protein-glutamine glutaminase 3 (Burkholderia thailandensis (strain ATCC 700388 / DSM 13276 / CCUG 48851 / CIP 106301 / E264)).